A 176-amino-acid chain; its full sequence is Adenine phosphoribosyltransferase (176 aa).

The protein belongs to the purine/pyrimidine phosphoribosyltransferase family. Homodimer.

The protein resides in the cytoplasm. The catalysed reaction is AMP + diphosphate = 5-phospho-alpha-D-ribose 1-diphosphate + adenine. It functions in the pathway purine metabolism; AMP biosynthesis via salvage pathway; AMP from adenine: step 1/1. Its function is as follows. Catalyzes a salvage reaction resulting in the formation of AMP, that is energically less costly than de novo synthesis. The sequence is that of Adenine phosphoribosyltransferase from Methylobacillus flagellatus (strain ATCC 51484 / DSM 6875 / VKM B-1610 / KT).